The chain runs to 264 residues: MPFITKISTQKKNTERFNIFLDDKYAFSVDADVLVKFELKKGKELDDLDIIEIQYGDEVKKGFNRALDFLSYRMRSTKEVEDHLKKKETSPPVIAEVIHRLNDYKYLNDQEFAAAYVSTHKKTNGKGPDVLFRELRAKGIDDDTIKEALSSFSFEDQTREAVKHVEKLLKKDKKLSTKELKQRAQLQLQRKGFSFDVISAAMDQIEYENDEDTEKEALRLHAEKAFRKYRYDGSYESAMKVKQFLFRKGFSLDLIEQLLQEEEY.

Belongs to the RecX family.

It is found in the cytoplasm. In terms of biological role, negatively modulates RecA activity. The chain is Regulatory protein RecX from Bacillus subtilis (strain 168).